The following is a 457-amino-acid chain: Siroheme synthase (457 aa).

The precorrin-2 dehydrogenase /sirohydrochlorin ferrochelatase stretch occupies residues 4–202; that stretch reads LPIFCQLRDR…ANADEKAVNA (199 aa). Residues 22–23 and 43–44 each bind NAD(+); these read DV and LT. A Phosphoserine modification is found at Ser128. The segment at 216–448 is uroporphyrinogen-III C-methyltransferase; sequence GEVVLVGAGP…IIVGRVVALR (233 aa). An S-adenosyl-L-methionine-binding site is contributed by Pro225. The active-site Proton acceptor is Asp248. Lys270 acts as the Proton donor in catalysis. S-adenosyl-L-methionine-binding positions include 301–303, Ile306, 331–332, Met382, Gly411, and Ala437; these read GGD and TA.

This sequence in the N-terminal section; belongs to the precorrin-2 dehydrogenase / sirohydrochlorin ferrochelatase family. In the C-terminal section; belongs to the precorrin methyltransferase family. Homodimer.

It carries out the reaction uroporphyrinogen III + 2 S-adenosyl-L-methionine = precorrin-2 + 2 S-adenosyl-L-homocysteine + H(+). The enzyme catalyses precorrin-2 + NAD(+) = sirohydrochlorin + NADH + 2 H(+). The catalysed reaction is siroheme + 2 H(+) = sirohydrochlorin + Fe(2+). Its pathway is cofactor biosynthesis; adenosylcobalamin biosynthesis; precorrin-2 from uroporphyrinogen III: step 1/1. The protein operates within cofactor biosynthesis; adenosylcobalamin biosynthesis; sirohydrochlorin from precorrin-2: step 1/1. It participates in porphyrin-containing compound metabolism; siroheme biosynthesis; precorrin-2 from uroporphyrinogen III: step 1/1. It functions in the pathway porphyrin-containing compound metabolism; siroheme biosynthesis; siroheme from sirohydrochlorin: step 1/1. Its pathway is porphyrin-containing compound metabolism; siroheme biosynthesis; sirohydrochlorin from precorrin-2: step 1/1. In terms of biological role, multifunctional enzyme that catalyzes the SAM-dependent methylations of uroporphyrinogen III at position C-2 and C-7 to form precorrin-2 via precorrin-1. Then it catalyzes the NAD-dependent ring dehydrogenation of precorrin-2 to yield sirohydrochlorin. Finally, it catalyzes the ferrochelation of sirohydrochlorin to yield siroheme. This is Siroheme synthase from Salmonella typhimurium (strain LT2 / SGSC1412 / ATCC 700720).